The primary structure comprises 118 residues: Large ribosomal subunit protein uL18 (118 aa).

Belongs to the universal ribosomal protein uL18 family. Part of the 50S ribosomal subunit; part of the 5S rRNA/L5/L18/L25 subcomplex. Contacts the 5S and 23S rRNAs.

Its function is as follows. This is one of the proteins that bind and probably mediate the attachment of the 5S RNA into the large ribosomal subunit, where it forms part of the central protuberance. This chain is Large ribosomal subunit protein uL18, found in Ralstonia pickettii (strain 12J).